A 306-amino-acid polypeptide reads, in one-letter code: Probable rRNA-processing protein EBP2 (306 aa).

An N-acetylmethionine modification is found at Met-1. Disordered stretches follow at residues 1–20 (MDTP…LVTD) and 77–99 (VPEI…VDPE). Phosphothreonine is present on Thr-3. Phosphoserine occurs at positions 7, 9, 11, 13, and 16. Lys-94 is covalently cross-linked (Glycyl lysine isopeptide (Lys-Gly) (interchain with G-Cter in SUMO2)). A coiled-coil region spans residues 138–169 (AEMAKSDLQMQKIRQKLQTKQAAMERSEKAKQ). Glycyl lysine isopeptide (Lys-Gly) (interchain with G-Cter in SUMO2) cross-links involve residues Lys-179 and Lys-218. The disordered stretch occupies residues 213–306 (LEGDQKPLAQ…TREKMKNRTH (94 aa)). Residues Ser-264 and Ser-270 each carry the phosphoserine modification. Over residues 274–306 (KTAHGRGLKRPGKKGSNKRPGKRTREKMKNRTH) the composition is skewed to basic residues.

The protein belongs to the EBP2 family. As to quaternary structure, specifically interacts with EBV EBNA1. The EBNA1-EBP2 interaction is important for the stable segregation of EBV episomes during cell division. Interacts with WDR46. As to expression, ubiquitous.

Its subcellular location is the nucleus. The protein localises to the nucleolus. Required for the processing of the 27S pre-rRNA. The protein is Probable rRNA-processing protein EBP2 (EBNA1BP2) of Homo sapiens (Human).